The chain runs to 148 residues: UPF0208 membrane protein HD_1715 (148 aa).

2 helical membrane passes run 41 to 60 (AARFMPIFACFAILWQYFFT) and 66 to 88 (ILANAIITSLFAISLPYQGLYWL).

It belongs to the UPF0208 family.

The protein localises to the cell inner membrane. This Haemophilus ducreyi (strain 35000HP / ATCC 700724) protein is UPF0208 membrane protein HD_1715.